Here is a 268-residue protein sequence, read N- to C-terminus: MAERTLVGLALKVGPLGEHDRLLSLLSDAEGVTRLAVPGARRPKSSLAAAAPLTLLELQVGGRSGLARVRQLRVLHSHAGLGRQLETLSAAQAFCDLCLQIGREDPVEGLLATLQLHLERLDQRSDCLDELLASSVQGAIHLLTLGGYSLPLQSCCLSGAPLEPPIGTWEWRCSLLPMDGFAIDRQPGAAMTLNPSELALLQRLTRADLPRRRDGELMGPRPVWLRLLAVVEIWIRTHLQRGNPALAMLRECVTAKQVSQHGADAANS.

The protein belongs to the RecO family.

Involved in DNA repair and RecF pathway recombination. This chain is DNA repair protein RecO, found in Parasynechococcus marenigrum (strain WH8102).